The following is a 139-amino-acid chain: Putative nickel-responsive regulator (139 aa).

Positions 79, 90, 92, and 98 each coordinate Ni(2+).

Belongs to the transcriptional regulatory CopG/NikR family. It depends on Ni(2+) as a cofactor.

Transcriptional regulator. This chain is Putative nickel-responsive regulator, found in Geobacter metallireducens (strain ATCC 53774 / DSM 7210 / GS-15).